Consider the following 435-residue polypeptide: Cyclin-dependent kinase 14 (435 aa).

A compositionally biased stretch (polar residues) spans 75 to 92 (RTQSSFDPFEKTSNQPTS). Residues 75-97 (RTQSSFDPFEKTSNQPTSPKFGK) form a disordered region. The region spanning 101-385 (YEKLEKLGEG…AQAALNHDYF (285 aa)) is the Protein kinase domain. Residues 107–115 (LGEGSYATV) and K130 contribute to the ATP site. The active-site Proton acceptor is D222.

The protein belongs to the protein kinase superfamily. CMGC Ser/Thr protein kinase family. CDC2/CDKX subfamily. Interacts with ccny; ccny mediates its recruitment to the plasma membrane and promotes phosphorylation of lrp6.

Its subcellular location is the cell membrane. It catalyses the reaction L-seryl-[protein] + ATP = O-phospho-L-seryl-[protein] + ADP + H(+). It carries out the reaction L-threonyl-[protein] + ATP = O-phospho-L-threonyl-[protein] + ADP + H(+). Functionally, serine/threonine-protein kinase involved in the control of the eukaryotic cell cycle, whose activity is controlled by an associated cyclin. Acts as a cell-cycle regulator of Wnt signaling pathway during G2/M phase by mediating the phosphorylation of lrp6, leading to the activation of the Wnt signaling pathway. This Xenopus laevis (African clawed frog) protein is Cyclin-dependent kinase 14 (cdk14).